An 837-amino-acid polypeptide reads, in one-letter code: A disintegrin and metalloproteinase with thrombospondin motifs 4 (837 aa).

An N-terminal signal peptide occupies residues 1-51; sequence MSQTGSHPGRGLAGRWLWGAQPCLLLPIVPLSWLVWLLLLLLASLLPSARL. Positions 52–212 are excised as a propeptide; it reads ASPLPREEEI…PSPRPRRAKR (161 aa). N-linked (GlcNAc...) asparagine glycosylation occurs at asparagine 68. Positions 166-191 are disordered; it reads EGGTPNSAGGPGAHILRRKSPASGQG. The Cysteine switch signature appears at 192–199; that stretch reads PMCNVKAP. Cysteine 194 provides a ligand contact to Zn(2+). The 211-residue stretch at 218–428 folds into the Peptidase M12B domain; it reads RFVETLVVAD…GYGHCLLDKP (211 aa). 11 cysteine pairs are disulfide-bonded: cysteine 293–cysteine 345, cysteine 322–cysteine 327, cysteine 339–cysteine 423, cysteine 377–cysteine 407, cysteine 449–cysteine 472, cysteine 460–cysteine 482, cysteine 467–cysteine 501, cysteine 495–cysteine 506, cysteine 532–cysteine 569, cysteine 536–cysteine 574, and cysteine 547–cysteine 559. Histidine 361 is a Zn(2+) binding site. Glutamate 362 is an active-site residue. Zn(2+)-binding residues include histidine 365 and histidine 371. A Disintegrin domain is found at 437–519; sequence TFPGKDYDAD…DQLQDFNIPQ (83 aa). The region spanning 520–575 is the TSP type-1 domain; it reads AGGWGPWGPWGDCSRTCGGGVQFSSRDCTRPVPRNGGKYCEGRRTRFRSCNTEDCP. The spacer stretch occupies residues 686–837; that stretch reads SKQSGSFRKF…LRRRPWVGRK (152 aa).

As to quaternary structure, interacts with SRPX2. Requires Zn(2+) as cofactor. In terms of processing, the precursor is cleaved by a furin endopeptidase. Glycosylated. Can be O-fucosylated by POFUT2 on a serine or a threonine residue found within the consensus sequence C1-X(2)-(S/T)-C2-G of the TSP type-1 repeat domains where C1 and C2 are the first and second cysteine residue of the repeat, respectively. Fucosylated repeats can then be further glycosylated by the addition of a beta-1,3-glucose residue by the glucosyltransferase, B3GALTL. Fucosylation mediates the efficient secretion of ADAMTS family members. Can also be C-glycosylated with one or two mannose molecules on tryptophan residues within the consensus sequence W-X-X-W of the TPRs, and N-glycosylated. These other glycosylations can also facilitate secretion.

The protein localises to the secreted. Its subcellular location is the extracellular space. It localises to the extracellular matrix. It catalyses the reaction Glutamyl endopeptidase. Bonds cleaved include 370-Thr-Glu-Gly-Glu-|-Ala-Arg-Gly-Ser-377 in the interglobular domain of mammalian aggrecan.. Cleaves aggrecan, a cartilage proteoglycan, at the '392-Glu-|-Ala-393' site and may be involved in its turnover. Also cleaves COMP. May play an important role in the destruction of aggrecan in arthritic diseases. This Pongo abelii (Sumatran orangutan) protein is A disintegrin and metalloproteinase with thrombospondin motifs 4 (ADAMTS4).